A 107-amino-acid chain; its full sequence is Thioredoxin 1 (107 aa).

Positions 2–107 constitute a Thioredoxin domain; the sequence is SAAAQVTDST…TLSQTLEKHL (106 aa). Cys32 and Cys35 are oxidised to a cystine.

This sequence belongs to the thioredoxin family.

Functionally, participates in various redox reactions through the reversible oxidation of its active center dithiol to a disulfide and catalyzes dithiol-disulfide exchange reactions. The chain is Thioredoxin 1 (trxA) from Nostoc sp. (strain PCC 7120 / SAG 25.82 / UTEX 2576).